The following is a 450-amino-acid chain: Involucrin (450 aa).

Positions 1 to 19 (MSQQHTLPVTLPPTLSQEL) are enriched in polar residues. 3 disordered regions span residues 1–43 (MSQQ…LPAP), 77–370 (QLQQ…EQLK), and 422–450 (PGQVQDIQPPQPPKGEVLLPAEQQQEPEV). Residues 86–108 (QEVHLAKHQELQELQEQELHLGK) are compositionally biased toward basic and acidic residues. The span at 120–135 (GKQQQQQESQEQELYL) shows a compositional bias: low complexity. Composition is skewed to basic and acidic residues over residues 187 to 200 (LGKRLEPQEQELHL) and 264 to 281 (QELHLGKRLEPQEQELHL). Positions 295–344 (GEAAAAGVTGAGPAASKAARRATGAGTAPGKAAAAAGATGAGTAATAPAT) are enriched in low complexity. Basic and acidic residues predominate over residues 345 to 370 (AEERQKAESLEQQLEQEKAQREEQLK).

It belongs to the involucrin family. Directly or indirectly cross-linked to cornifelin (CNFN). In terms of processing, substrate of transglutaminase. Specific glutamines or lysines are cross-linked to keratins, desmoplakin and to inter involucrin molecules. As to expression, keratinocytes of epidermis and other stratified squamous epithelia.

It is found in the cytoplasm. Functionally, part of the insoluble cornified cell envelope (CE) of stratified squamous epithelia. This is Involucrin (IVL) from Lemur catta (Ring-tailed lemur).